We begin with the raw amino-acid sequence, 251 residues long: Coenzyme F420:L-glutamate ligase (251 aa).

Residues 9–12, 38–39, and lysine 43 each bind GTP; these read LPEI and ST. Aspartate 113 is a binding site for a divalent metal cation. Asparagine 116 is a GTP binding site. 3 residues coordinate a divalent metal cation: aspartate 149, threonine 150, and glutamate 207. Position 205 to 212 (205 to 212) interacts with GTP; it reads AGEGDGGT.

Belongs to the CofE family. Homodimer. Requires Mg(2+) as cofactor. The cofactor is Mn(2+). K(+) serves as cofactor.

It carries out the reaction oxidized coenzyme F420-0 + GTP + L-glutamate = oxidized coenzyme F420-1 + GDP + phosphate + H(+). The enzyme catalyses oxidized coenzyme F420-1 + GTP + L-glutamate = oxidized coenzyme F420-2 + GDP + phosphate + H(+). It functions in the pathway cofactor biosynthesis; coenzyme F420 biosynthesis. In terms of biological role, catalyzes the GTP-dependent successive addition of two or more gamma-linked L-glutamates to the L-lactyl phosphodiester of 7,8-didemethyl-8-hydroxy-5-deazariboflavin (F420-0) to form coenzyme F420-0-glutamyl-glutamate (F420-2) or polyglutamated F420 derivatives. The polypeptide is Coenzyme F420:L-glutamate ligase (Halorubrum lacusprofundi (strain ATCC 49239 / DSM 5036 / JCM 8891 / ACAM 34)).